Here is a 226-residue protein sequence, read N- to C-terminus: 6-deoxy-6-sulfo-D-fructose transaldolase (226 aa).

The Schiff-base intermediate with substrate role is filled by Lys-89.

The protein belongs to the transaldolase family.

The catalysed reaction is 6-deoxy-6-sulfo-D-fructose + D-glyceraldehyde 3-phosphate = D-fructose 6-phosphate + (2S)-3-sulfolactaldehyde. The enzyme catalyses 6-deoxy-6-sulfo-D-fructose + D-erythrose 4-phosphate = (2S)-3-sulfolactaldehyde + D-sedoheptulose 7-phosphate. In terms of biological role, part of the sulfo-TAL (or sulfo-SFT) pathway, a D-sulfoquinovose degradation pathway that produces sulfolactate (SL). Catalyzes the conversion of 6-deoxy-6-sulfo-D-fructose (SF) and glyceraldehyde 3-phosphate (GAP) into fructose-6-phosphate (F6P) and 3-sulfolactaldehyde (SLA). Can also catalyze the SF-cleavage with erythrose 4-phosphate (E4P) as acceptor, forming 3-sulfolactaldehyde (SLA) and sedoheptulose 7-phosphate (S7P). The protein is 6-deoxy-6-sulfo-D-fructose transaldolase of Priestia aryabhattai (Bacillus aryabhattai).